We begin with the raw amino-acid sequence, 682 residues long: DNA ligase (682 aa).

NAD(+) contacts are provided by residues aspartate 42–aspartate 46, serine 91–leucine 92, and glutamate 124. Lysine 126 (N6-AMP-lysine intermediate) is an active-site residue. NAD(+) contacts are provided by arginine 147, glutamate 184, lysine 302, and lysine 326. Residues cysteine 420, cysteine 423, cysteine 438, and cysteine 444 each coordinate Zn(2+). The 80-residue stretch at isoleucine 603 to asparagine 682 folds into the BRCT domain.

The protein belongs to the NAD-dependent DNA ligase family. LigA subfamily. Mg(2+) serves as cofactor. It depends on Mn(2+) as a cofactor.

The catalysed reaction is NAD(+) + (deoxyribonucleotide)n-3'-hydroxyl + 5'-phospho-(deoxyribonucleotide)m = (deoxyribonucleotide)n+m + AMP + beta-nicotinamide D-nucleotide.. DNA ligase that catalyzes the formation of phosphodiester linkages between 5'-phosphoryl and 3'-hydroxyl groups in double-stranded DNA using NAD as a coenzyme and as the energy source for the reaction. It is essential for DNA replication and repair of damaged DNA. The chain is DNA ligase from Actinobacillus pleuropneumoniae serotype 7 (strain AP76).